Consider the following 511-residue polypeptide: Probable cytochrome P450 4ac2 (511 aa).

E318 and C455 together coordinate heme.

It belongs to the cytochrome P450 family. The cofactor is heme.

Its subcellular location is the endoplasmic reticulum membrane. The protein resides in the microsome membrane. May be involved in the metabolism of insect hormones and in the breakdown of synthetic insecticides. This Drosophila melanogaster (Fruit fly) protein is Probable cytochrome P450 4ac2 (Cyp4ac2).